Reading from the N-terminus, the 239-residue chain is O-methyltransferase ankF (239 aa).

Residues glutamate 71, glycine 73–threonine 74, serine 79, glutamate 98, and alanine 127 contribute to the S-adenosyl-L-methionine site.

Belongs to the class I-like SAM-binding methyltransferase superfamily. Cation-dependent O-methyltransferase family.

It carries out the reaction NK13650 B + S-adenosyl-L-methionine = NK13650 D + S-adenosyl-L-homocysteine + H(+). Its pathway is secondary metabolite biosynthesis. O-methyltransferase; part of the ank cluster that mediates the biosynthesis of NK13650 C, a highly modified cyclo-arginine-tyrosine dipeptide. AnkF converts NK13650 B to produce NK13650 D via methylation of the C-17 phenol group. Within the pathway, the cyclodipeptide synthase ankA acts as the scaffold-generating enzyme and is responsible for formation of the cyclo-Arg-Tyr diketopiperazine (cRY) from L-Arg and L-Tyr. The ankA product cRY is desaturated by the cytochrome P450 monooxygenase ankB to yield a dehydro-cyclodipeptide intermediate. The FAD-dependent monooxygenase ankC then installs the m-OH, ankD catalyzes the attachment of L-homoserine, and ankE ligates citrate to the ankD product to yield NK13650 B. The O-methyltransferase ankF is responsible for methylation of the C-17 phenol group of NK13650 B to produce NK13650 D. Amidation of NK13650 D with L-Asp by ankG then leads to the production of NK13650 C, whereas amidation of NK13650 B produces NK13650 A. The sequence is that of O-methyltransferase ankF from Aspergillus thermomutatus (Neosartorya pseudofischeri).